Reading from the N-terminus, the 85-residue chain is Small ribosomal subunit protein uS17 (85 aa).

The protein belongs to the universal ribosomal protein uS17 family. Part of the 30S ribosomal subunit.

In terms of biological role, one of the primary rRNA binding proteins, it binds specifically to the 5'-end of 16S ribosomal RNA. In Syntrophus aciditrophicus (strain SB), this protein is Small ribosomal subunit protein uS17.